Consider the following 554-residue polypeptide: Glucose-6-phosphate isomerase (554 aa).

The Proton donor role is filled by glutamate 359. Active-site residues include histidine 390 and lysine 518.

This sequence belongs to the GPI family.

The protein resides in the cytoplasm. The enzyme catalyses alpha-D-glucose 6-phosphate = beta-D-fructose 6-phosphate. It functions in the pathway carbohydrate biosynthesis; gluconeogenesis. It participates in carbohydrate degradation; glycolysis; D-glyceraldehyde 3-phosphate and glycerone phosphate from D-glucose: step 2/4. Its function is as follows. Catalyzes the reversible isomerization of glucose-6-phosphate to fructose-6-phosphate. This is Glucose-6-phosphate isomerase from Pseudomonas putida (strain W619).